Reading from the N-terminus, the 1367-residue chain is Dynactin, 150 kDa isoform (1367 aa).

Residues 28–70 (GETAFAPGTWVGIELDEPSGKNDGSVQGERYFNCEMGYGMFVR) enclose the CAP-Gly domain. The tract at residues 76–318 (VIAQPPPPPP…NLKATTITPR (243 aa)) is disordered. Composition is skewed to low complexity over residues 88–99 (TFRRSVTTRPTS) and 132–149 (PSRT…RSPT). Positions 150–163 (KQLATASSSGNPSR) are enriched in polar residues. Composition is skewed to low complexity over residues 164 to 190 (SGTP…SRHS) and 243 to 259 (STGS…KRGS). Coiled coils occupy residues 321 to 598 (ITNT…MQEE), 637 to 698 (LQSD…EAEQ), and 1039 to 1199 (AELK…RARL).

The protein belongs to the dynactin 150 kDa subunit family. Large macromolecular complex of at least 10 components; p150(glued) binds directly to microtubules and to cytoplasmic dynein.

It localises to the cytoplasm. Its subcellular location is the cytoskeleton. In terms of biological role, required for the cytoplasmic dynein-driven retrograde movement of vesicles and organelles along microtubules. Dynein-dynactin interaction is a key component of the mechanism of axonal transport of vesicles and organelles. The protein is Dynactin, 150 kDa isoform (ro-3) of Neurospora crassa (strain ATCC 24698 / 74-OR23-1A / CBS 708.71 / DSM 1257 / FGSC 987).